The following is a 336-amino-acid chain: Biotin synthase (336 aa).

In terms of domain architecture, Radical SAM core spans N54 to R281. [4Fe-4S] cluster is bound by residues C69, C73, and C76. 4 residues coordinate [2Fe-2S] cluster: C113, C144, C204, and R276.

It belongs to the radical SAM superfamily. Biotin synthase family. In terms of assembly, homodimer. [4Fe-4S] cluster serves as cofactor. Requires [2Fe-2S] cluster as cofactor.

It catalyses the reaction (4R,5S)-dethiobiotin + (sulfur carrier)-SH + 2 reduced [2Fe-2S]-[ferredoxin] + 2 S-adenosyl-L-methionine = (sulfur carrier)-H + biotin + 2 5'-deoxyadenosine + 2 L-methionine + 2 oxidized [2Fe-2S]-[ferredoxin]. It functions in the pathway cofactor biosynthesis; biotin biosynthesis; biotin from 7,8-diaminononanoate: step 2/2. Catalyzes the conversion of dethiobiotin (DTB) to biotin by the insertion of a sulfur atom into dethiobiotin via a radical-based mechanism. The protein is Biotin synthase of Burkholderia pseudomallei (strain 1106a).